Consider the following 469-residue polypeptide: Mitochondrial distribution and morphology protein 10 (469 aa).

This sequence belongs to the MDM10 family. As to quaternary structure, component of the ER-mitochondria encounter structure (ERMES) or MDM complex, composed of MMM1, MDM10, MDM12 and MDM34. Associates with the mitochondrial outer membrane sorting assembly machinery SAM(core) complex.

It localises to the mitochondrion outer membrane. Its function is as follows. Component of the ERMES/MDM complex, which serves as a molecular tether to connect the endoplasmic reticulum and mitochondria. Components of this complex are involved in the control of mitochondrial shape and protein biogenesis and may function in phospholipid exchange. MDM10 is involved in the late assembly steps of the general translocase of the mitochondrial outer membrane (TOM complex). Functions in the TOM40-specific route of the assembly of outer membrane beta-barrel proteins, including the association of TOM40 with the receptor TOM22 and small TOM proteins. Can associate with the SAM(core) complex as well as the MDM12-MMM1 complex, both involved in late steps of the major beta-barrel assembly pathway, that is responsible for biogenesis of all outer membrane beta-barrel proteins. May act as a switch that shuttles between both complexes and channels precursor proteins into the TOM40-specific pathway. Plays a role in mitochondrial morphology and in the inheritance of mitochondria. The polypeptide is Mitochondrial distribution and morphology protein 10 (Scheffersomyces stipitis (strain ATCC 58785 / CBS 6054 / NBRC 10063 / NRRL Y-11545) (Yeast)).